The primary structure comprises 450 residues: MSAHGDPIPMTAHPSGPLSGTAQVPGDKSISHRSLILGALAVGETKVTGLLEGQDVLDTARAMQAFGAEVIQHAPGAWSVHGVGTGGFAEPEDVIDCGNSGTGVRLIMGAMATTPITATFTGDASLRSRPMGRITDPLAGFGTTAVGRRGGRLPMTLTGAADPVPVRYTVPVPSAQVKSAVLLAGLNAPGQTVVIEAEATRDHSERMLRGFGAEISVESAPEGNVITLTGQPELRPQTIVVPRDPSSAAFPVAVGLIVPGSDVLVPGIGLNPTRAGLYTTLQEMGAELSFENMREEGGEPVADLRARFSDAMQGIEVPPERAPSMIDEYPILSVIAAYATGRTVMRGVKELRVKESDRIDAMARGLEACGVRVEEDEDTLIVHGMGPGGVPGGATCASHLDHRIAMSFLCCGLAAQTPVSVDDGGPIATSFPIFEPLMTALGATLTRDST.

Positions 1–26 (MSAHGDPIPMTAHPSGPLSGTAQVPG) are disordered. Positions 28, 29, and 33 each coordinate 3-phosphoshikimate. Lysine 28 lines the phosphoenolpyruvate pocket. The phosphoenolpyruvate site is built by glycine 101 and arginine 129. Serine 174, glutamine 176, aspartate 327, and lysine 354 together coordinate 3-phosphoshikimate. Phosphoenolpyruvate is bound at residue glutamine 176. Aspartate 327 functions as the Proton acceptor in the catalytic mechanism. Phosphoenolpyruvate-binding residues include arginine 358 and arginine 403.

Belongs to the EPSP synthase family. Monomer.

Its subcellular location is the cytoplasm. It carries out the reaction 3-phosphoshikimate + phosphoenolpyruvate = 5-O-(1-carboxyvinyl)-3-phosphoshikimate + phosphate. It participates in metabolic intermediate biosynthesis; chorismate biosynthesis; chorismate from D-erythrose 4-phosphate and phosphoenolpyruvate: step 6/7. Functionally, catalyzes the transfer of the enolpyruvyl moiety of phosphoenolpyruvate (PEP) to the 5-hydroxyl of shikimate-3-phosphate (S3P) to produce enolpyruvyl shikimate-3-phosphate and inorganic phosphate. The polypeptide is 3-phosphoshikimate 1-carboxyvinyltransferase (Dinoroseobacter shibae (strain DSM 16493 / NCIMB 14021 / DFL 12)).